The sequence spans 240 residues: Small ribosomal subunit protein uS2 (240 aa).

Belongs to the universal ribosomal protein uS2 family.

The sequence is that of Small ribosomal subunit protein uS2 (rpsB) from Pasteurella multocida (strain Pm70).